We begin with the raw amino-acid sequence, 147 residues long: Large ribosomal subunit protein uL13 (147 aa).

Belongs to the universal ribosomal protein uL13 family. In terms of assembly, part of the 50S ribosomal subunit.

This protein is one of the early assembly proteins of the 50S ribosomal subunit, although it is not seen to bind rRNA by itself. It is important during the early stages of 50S assembly. The chain is Large ribosomal subunit protein uL13 from Mycolicibacterium paratuberculosis (strain ATCC BAA-968 / K-10) (Mycobacterium paratuberculosis).